Here is a 296-residue protein sequence, read N- to C-terminus: Probable AP endonuclease (296 aa).

Cys-16 and Cys-20 are oxidised to a cystine. Residues His-78, His-115, Glu-142, His-182, His-218, Asp-231, His-233, and Glu-271 each contribute to the Zn(2+) site.

The protein belongs to the AP endonuclease 2 family. Zn(2+) serves as cofactor.

It localises to the host nucleus. The protein resides in the host cytoplasm. It is found in the virion. Endonuclease that plays a role in DNA repair. Cleaves phosphodiester bonds on the 5' side of apurinic or apyrimidinic sites (AP sites). In addition to endonuclease activity, the ASFV enzyme has a proofreading 3'-5' exonuclease activity that is considerably more efficient in the elimination of a mismatch than in that of a correctly paired base. Displays 3'-phosphatase and 3'-repair diesterase activities. The single nucleotide gaps generated by the AP endonuclease are filled by the viral AP endonuclease and DNA ligase. The sequence is that of Probable AP endonuclease from Ornithodoros (relapsing fever ticks).